We begin with the raw amino-acid sequence, 181 residues long: Alkyl hydroperoxide reductase AhpD (181 aa).

Cys-130 (proton donor) is an active-site residue. Cysteines 130 and 133 form a disulfide. Cys-133 serves as the catalytic Cysteine sulfenic acid (-SOH) intermediate.

Belongs to the AhpD family.

The enzyme catalyses N(6)-[(R)-dihydrolipoyl]-L-lysyl-[lipoyl-carrier protein] + a hydroperoxide = N(6)-[(R)-lipoyl]-L-lysyl-[lipoyl-carrier protein] + an alcohol + H2O. Antioxidant protein with alkyl hydroperoxidase activity. Required for the reduction of the AhpC active site cysteine residues and for the regeneration of the AhpC enzyme activity. This is Alkyl hydroperoxide reductase AhpD from Gluconacetobacter diazotrophicus (strain ATCC 49037 / DSM 5601 / CCUG 37298 / CIP 103539 / LMG 7603 / PAl5).